A 383-amino-acid chain; its full sequence is tRNA (adenine(58)-N(1))-methyltransferase catalytic subunit TRM61 (383 aa).

Residues V94, 121-124 (SGSF), E139, R144, 168-169 (DV), and D203 each bind S-adenosyl-L-methionine. Phosphoserine is present on S302.

It belongs to the class I-like SAM-binding methyltransferase superfamily. TRM61 family. In terms of assembly, heterotetramer; composed of two copies of TRM6/GCD10 and two copies of TRM61/GCD14.

It is found in the nucleus. It carries out the reaction adenosine(58) in tRNA + S-adenosyl-L-methionine = N(1)-methyladenosine(58) in tRNA + S-adenosyl-L-homocysteine + H(+). Catalytic subunit of tRNA (adenine-N(1)-)-methyltransferase, which catalyzes the formation of N(1)-methyladenine at position 58 (m1A58) in initiator methionyl-tRNA. GCD14 is also required for repression of GCN4 mRNA translation by the upstream open reading frames (uORFs) under conditions of amino acid sufficiency. The sequence is that of tRNA (adenine(58)-N(1))-methyltransferase catalytic subunit TRM61 (GCD14) from Saccharomyces cerevisiae (strain ATCC 204508 / S288c) (Baker's yeast).